A 271-amino-acid polypeptide reads, in one-letter code: PA-phosphatase related-family protein DDB_G0284367 (271 aa).

A run of 6 helical transmembrane segments spans residues 23 to 43 (FLCL…IPPF), 68 to 88 (IVPV…VFIG), 102 to 122 (AALG…ILKV), 150 to 170 (FPSG…FYLC), 181 to 201 (GNIL…LVAV), and 211 to 231 (FSDI…VYFM).

It belongs to the PA-phosphatase related phosphoesterase family.

It is found in the membrane. The protein is PA-phosphatase related-family protein DDB_G0284367 of Dictyostelium discoideum (Social amoeba).